The following is a 313-amino-acid chain: Porphobilinogen deaminase (313 aa).

Cysteine 242 carries the post-translational modification S-(dipyrrolylmethanemethyl)cysteine.

Belongs to the HMBS family. Monomer. It depends on dipyrromethane as a cofactor.

The enzyme catalyses 4 porphobilinogen + H2O = hydroxymethylbilane + 4 NH4(+). Its pathway is porphyrin-containing compound metabolism; protoporphyrin-IX biosynthesis; coproporphyrinogen-III from 5-aminolevulinate: step 2/4. Tetrapolymerization of the monopyrrole PBG into the hydroxymethylbilane pre-uroporphyrinogen in several discrete steps. The polypeptide is Porphobilinogen deaminase (Escherichia coli (strain K12 / MC4100 / BW2952)).